The chain runs to 191 residues: Protein GrpE (191 aa).

Belongs to the GrpE family. Homodimer.

The protein localises to the cytoplasm. Its function is as follows. Participates actively in the response to hyperosmotic and heat shock by preventing the aggregation of stress-denatured proteins, in association with DnaK and GrpE. It is the nucleotide exchange factor for DnaK and may function as a thermosensor. Unfolded proteins bind initially to DnaJ; upon interaction with the DnaJ-bound protein, DnaK hydrolyzes its bound ATP, resulting in the formation of a stable complex. GrpE releases ADP from DnaK; ATP binding to DnaK triggers the release of the substrate protein, thus completing the reaction cycle. Several rounds of ATP-dependent interactions between DnaJ, DnaK and GrpE are required for fully efficient folding. The polypeptide is Protein GrpE (Listeria monocytogenes serotype 4a (strain HCC23)).